Reading from the N-terminus, the 265-residue chain is MSRRSATSSGHPKVCACPSGLDPYRLPNHVAVIMDGNGRWAKARGLPRMVGHRAGVEALKRTLRLCSDWGIGALTAYAFSTENWSRPGDEVNFLMTLFERVLQRELESLEREKVRIRFLGDLEGLPSGLQELISEATELTVRNNGIHFNVCTNYGGRRELVLAAQKLAQRAARGDLDPTLIDENSFEAELLTAGEVDPDLLIRTSGERRISNFLLWQLAYAEIHVTDVCWPDFDEVALTKALFDYQSRCRRFGGLDPIAANHLGS.

Aspartate 35 is an active-site residue. Residue aspartate 35 participates in Mg(2+) binding. Substrate contacts are provided by residues 36–39 (GNGR), tryptophan 40, arginine 48, histidine 52, and 80–82 (STE). Asparagine 83 acts as the Proton acceptor in catalysis. Residues tryptophan 84, arginine 86, arginine 203, and 209–211 (RIS) each bind substrate. Glutamate 222 serves as a coordination point for Mg(2+).

It belongs to the UPP synthase family. Homodimer. Requires Mg(2+) as cofactor.

Catalyzes the condensation of isopentenyl diphosphate (IPP) with allylic pyrophosphates generating different type of terpenoids. In Prochlorococcus marinus (strain MIT 9313), this protein is Isoprenyl transferase.